We begin with the raw amino-acid sequence, 214 residues long: Homologous-pairing protein 2 homolog (214 aa).

The stretch at 79–147 forms a coiled coil; the sequence is SDSELKDLDA…EHKLTNIKSA (69 aa). Residues 115 to 179 are DNA-binding; sequence TSSLTTEEML…WKKRKRMATD (65 aa).

The protein belongs to the HOP2 family.

Its subcellular location is the nucleus. Its function is as follows. Plays an important role in meiotic recombination. Stimulates DMC1-mediated strand exchange required for pairing of homologous chromosomes during meiosis. The sequence is that of Homologous-pairing protein 2 homolog (psmc3ip) from Xenopus laevis (African clawed frog).